The following is a 203-amino-acid chain: MLEALDLAGVRGERRLFDHLTFRIVPGECLSVHGENGSGKTTLLRTLAGFATPAAGRVLWKGKPLRNQWSEYQRELVYNGHGIGLKEDLNALDNLLAAAAIAGEPVTTECVESALDEVGLAEHRHLPFRMLSQGQKRRASLARLLLYRRKLWILDEPSTALDQFGARWLGELIHRHQSRGGMVVLTSHQELALKTSQTVRMGA.

An ABC transporter domain is found at Leu2–Ala203. Gly34–Thr41 is a binding site for ATP.

This sequence belongs to the ABC transporter superfamily. CcmA exporter (TC 3.A.1.107) family. In terms of assembly, the complex is composed of two ATP-binding proteins (CcmA) and two transmembrane proteins (CcmB).

It localises to the cell inner membrane. The enzyme catalyses heme b(in) + ATP + H2O = heme b(out) + ADP + phosphate + H(+). Part of the ABC transporter complex CcmAB involved in the biogenesis of c-type cytochromes; once thought to export heme, this seems not to be the case, but its exact role is uncertain. Responsible for energy coupling to the transport system. The sequence is that of Cytochrome c biogenesis ATP-binding export protein CcmA from Pseudomonas aeruginosa.